Reading from the N-terminus, the 459-residue chain is Periodic tryptophan protein 1 homolog (459 aa).

Residues 44–84 are disordered; sequence GDTQQELDEESDDDAEEGENAEEDQNDMDVDDHADANSENR. Over residues 48-73 the composition is skewed to acidic residues; the sequence is QELDEESDDDAEEGENAEEDQNDMDV. Positions 74 to 84 are enriched in basic and acidic residues; the sequence is DDHADANSENR. 5 WD repeats span residues 168-214, 232-272, 275-315, 321-361, and 365-405; these read LLPS…AIEP, GHKD…PHTT, AFGK…GVNS, KVDG…QLLW, and AHNE…AKHV. Phosphoserine is present on S385.

Belongs to the WD repeat PWP1 family. In terms of assembly, interacts with Mybbp1A. Post-translationally, phosphorylated in response to nutrient-activated TORC1 signaling. In terms of tissue distribution, detected in the germline of adult testis and ovary (at protein level). Detected in ovary somatic cells, in zfh1-positive cyst cells in the testis and absent in differentiated cyst cells (at protein level).

Its subcellular location is the nucleus. The protein resides in the nucleolus. It localises to the chromosome. The protein localises to the nucleoplasm. Functionally, chromatin-associated factor that regulates transcription. Regulates Pol I-mediated rRNA biogenesis and, probably, Pol III-mediated transcription. Regulates the localization to the nucleolus of Cdk7, a regulator of the Pol I-elongation factor TFIIH. Acts as a regulator of cell proliferation and tissue growth as part of the TORC1 and Myc signaling pathway in response to nutrients. Required in males for both germline stem cell (GSC) maintenance and early stages of germ cell differentiation of germ cell cysts. Not required for female germline stem cell (GSC) maintenance, but necessary to regulate germ cell differentiation and egg chamber development. In female somatic cells, required for follicle stem cell survival and maintenance. This chain is Periodic tryptophan protein 1 homolog, found in Drosophila melanogaster (Fruit fly).